A 571-amino-acid polypeptide reads, in one-letter code: Arginine--tRNA ligase (571 aa).

The 'HIGH' region signature appears at 122–132 (PNIAKEMHVGH).

The protein belongs to the class-I aminoacyl-tRNA synthetase family. Monomer.

It is found in the cytoplasm. The catalysed reaction is tRNA(Arg) + L-arginine + ATP = L-arginyl-tRNA(Arg) + AMP + diphosphate. The polypeptide is Arginine--tRNA ligase (Buchnera aphidicola subsp. Cinara cedri (strain Cc)).